Consider the following 349-residue polypeptide: tRNA pseudouridine synthase D (349 aa).

Residue Phe27 coordinates substrate. The Nucleophile role is filled by Asp80. Asn129 is a substrate binding site. A TRUD domain is found at 155–303 (GVPNYFGAQR…VEAARRAMLL (149 aa)). Phe329 serves as a coordination point for substrate.

Belongs to the pseudouridine synthase TruD family.

The enzyme catalyses uridine(13) in tRNA = pseudouridine(13) in tRNA. Its function is as follows. Responsible for synthesis of pseudouridine from uracil-13 in transfer RNAs. This is tRNA pseudouridine synthase D from Escherichia coli O6:K15:H31 (strain 536 / UPEC).